The chain runs to 204 residues: N-(5'-phosphoribosyl)anthranilate isomerase (204 aa).

The protein belongs to the TrpF family.

The enzyme catalyses N-(5-phospho-beta-D-ribosyl)anthranilate = 1-(2-carboxyphenylamino)-1-deoxy-D-ribulose 5-phosphate. Its pathway is amino-acid biosynthesis; L-tryptophan biosynthesis; L-tryptophan from chorismate: step 3/5. This is N-(5'-phosphoribosyl)anthranilate isomerase from Bacillus cereus (strain B4264).